The primary structure comprises 202 residues: Imidazoleglycerol-phosphate dehydratase (202 aa).

Belongs to the imidazoleglycerol-phosphate dehydratase family.

It is found in the cytoplasm. It catalyses the reaction D-erythro-1-(imidazol-4-yl)glycerol 3-phosphate = 3-(imidazol-4-yl)-2-oxopropyl phosphate + H2O. It functions in the pathway amino-acid biosynthesis; L-histidine biosynthesis; L-histidine from 5-phospho-alpha-D-ribose 1-diphosphate: step 6/9. This is Imidazoleglycerol-phosphate dehydratase from Rhizobium etli (strain ATCC 51251 / DSM 11541 / JCM 21823 / NBRC 15573 / CFN 42).